Consider the following 274-residue polypeptide: tRNA (cytosine(48)-C(5))-methyltransferase (274 aa).

Residues 91-97, Glu115, Arg120, Asp142, Asp163, Asn169, and Arg189 contribute to the S-adenosyl-L-methionine site; that span reads CAAPGGK. Cys212 (nucleophile) is an active-site residue.

It belongs to the class I-like SAM-binding methyltransferase superfamily. RsmB/NOP family.

The protein resides in the cytoplasm. It carries out the reaction cytidine(48) in tRNA precursor + S-adenosyl-L-methionine = 5-methylcytidine(48) in tRNA precursor + S-adenosyl-L-homocysteine + H(+). It catalyses the reaction cytidine(40) in tRNA precursor + S-adenosyl-L-methionine = 5-methylcytidine(40) in tRNA precursor + S-adenosyl-L-homocysteine + H(+). Catalyzes AdoMet-dependent formation of m5C in tRNA. Cytidine residue at either position 40 or position 48 is likely to be methylated. This chain is tRNA (cytosine(48)-C(5))-methyltransferase (trm4), found in Methanocaldococcus jannaschii (strain ATCC 43067 / DSM 2661 / JAL-1 / JCM 10045 / NBRC 100440) (Methanococcus jannaschii).